Consider the following 321-residue polypeptide: Sideroflexin-3 (321 aa).

The residue at position 1 (Met1) is an N-acetylmethionine. The next 4 membrane-spanning stretches (helical) occupy residues 146 to 164 (LGTA…ALGL), 174 to 194 (LVGR…NIPL), 225 to 245 (IFQV…IPPV), and 266 to 286 (LQVG…CALF).

The protein belongs to the sideroflexin family. As to expression, widely expressed.

Its subcellular location is the mitochondrion membrane. The enzyme catalyses L-serine(in) = L-serine(out). Mitochondrial serine transporter that mediates transport of serine into mitochondria, an important step of the one-carbon metabolism pathway. Mitochondrial serine is converted to glycine and formate, which then exits to the cytosol where it is used to generate the charged folates that serve as one-carbon donors. The polypeptide is Sideroflexin-3 (Mus musculus (Mouse)).